The chain runs to 609 residues: Glutamine--fructose-6-phosphate aminotransferase [isomerizing] (609 aa).

The Nucleophile; for GATase activity role is filled by Cys-2. One can recognise a Glutamine amidotransferase type-2 domain in the interval 2–219 (CGIFGYLGNQ…SGEFAIVSQG (218 aa)). SIS domains lie at 285 to 426 (LSDV…VHGA) and 458 to 599 (WAQP…IDCP). The active-site For Fru-6P isomerization activity is Lys-604.

Homodimer.

Its subcellular location is the cytoplasm. The catalysed reaction is D-fructose 6-phosphate + L-glutamine = D-glucosamine 6-phosphate + L-glutamate. In terms of biological role, catalyzes the first step in hexosamine metabolism, converting fructose-6P into glucosamine-6P using glutamine as a nitrogen source. The chain is Glutamine--fructose-6-phosphate aminotransferase [isomerizing] from Chlamydia pneumoniae (Chlamydophila pneumoniae).